The chain runs to 335 residues: UPF0065 protein BB4329 (335 aa).

Positions 1 to 39 are cleaved as a signal peptide; the sequence is MNKNIPAFHRRCHGLVQGLARTLLLAPVLLALSVPAAQA.

The protein belongs to the UPF0065 (bug) family.

It is found in the periplasm. This is UPF0065 protein BB4329 from Bordetella bronchiseptica (strain ATCC BAA-588 / NCTC 13252 / RB50) (Alcaligenes bronchisepticus).